Consider the following 288-residue polypeptide: MKKIKKAIIPAAGLGTRFLPATKAMPKEMLPILDKPTIQYIVEEAARAGIEDIIIVTGRHKRAIEDHFDSQKELEMVLKEKGKSELLEKVQYSTELANIFYVRQKEQKGLGHAISSARQFIGNEPFVVLLGDDIVESEVPAVKQLIDVYEETGHSVIGVQEVPEADTHRYGIIDPLTKNGRQYEVKKFVEKPAQGTAPSNLAIMGRYVLTPEIFDYLKTQKEGAGNEIQLTDAIERMNNDNQVYAYDFEGERYDVGEKLGFVKTTIEYALKDDSMREELTRFIKELGL.

This sequence belongs to the UDPGP type 2 family.

The enzyme catalyses alpha-D-glucose 1-phosphate + UTP + H(+) = UDP-alpha-D-glucose + diphosphate. It participates in glycolipid metabolism; diglucosyl-diacylglycerol biosynthesis. Functionally, catalyzes the formation of UDP-glucose from glucose-1-phosphate and UTP. This is an intermediate step in the biosynthesis of diglucosyl-diacylglycerol (Glc2-DAG), i.e. the predominant glycolipid found in the S.aureus membrane, which is also used as a membrane anchor for lipoteichoic acid (LTA). The sequence is that of UTP--glucose-1-phosphate uridylyltransferase (gtaB) from Staphylococcus aureus (strain bovine RF122 / ET3-1).